Consider the following 396-residue polypeptide: Elongation factor Tu (396 aa).

The 196-residue stretch at 10–205 folds into the tr-type G domain; sequence KPHVNIGTIG…AVDESIPDPV (196 aa). The tract at residues 19–26 is G1; that stretch reads GHVDHGKT. 19-26 contributes to the GTP binding site; that stretch reads GHVDHGKT. Threonine 26 contacts Mg(2+). Positions 62–66 are G2; that stretch reads GITIN. The segment at 83 to 86 is G3; that stretch reads DAPG. Residues 83 to 87 and 138 to 141 each bind GTP; these read DAPGH and NKAD. Residues 138–141 form a G4 region; the sequence is NKAD. The tract at residues 175–177 is G5; it reads SAL.

This sequence belongs to the TRAFAC class translation factor GTPase superfamily. Classic translation factor GTPase family. EF-Tu/EF-1A subfamily. In terms of assembly, monomer.

The protein localises to the cytoplasm. The catalysed reaction is GTP + H2O = GDP + phosphate + H(+). Its function is as follows. GTP hydrolase that promotes the GTP-dependent binding of aminoacyl-tRNA to the A-site of ribosomes during protein biosynthesis. The polypeptide is Elongation factor Tu (Mycobacterium sp. (strain JLS)).